Here is a 1857-residue protein sequence, read N- to C-terminus: MRPEVEQELAHTLLVELLAYQFASPVRWIETQDVILAEQRTERIVEIGPADTLGGMARRTLASKYEAYDAATSVQRQILCYNKDAKEIYYDVDPVEEEPEATEPAPSATPAAPAAAPAAGAPPPPPSAGPAASVEDIPVTAVDILRTLVAQKLKKSLADVPLSKAIKDLVGGKSTLQNEILGDLGKEFGSTPEKPEDVPLDELGASMQATFNGQLGKQSSSLIARMVSSKMPGGFNITSVRKYLETRWGLGSGRQDGVLLLALTMEPAARLGSEVDAKAYLDDVTNKYAASAGVNLSAPVAGGDSGGAGGGMVMDPAAIDALTKDQRALFKQQLEIIARYLKMDLRGGEKAHVISQETQKALQAQLDLWQAEHGDFYASGIEPSFDQLKARVYDSSWNWARQDALSMYYDIIFGRLQVVDREIVSQCIRIMNRSNPLLLDFMQYHIDNCPTERGETYQLAKELGQQLIENCREVLEVAPVYKDVAVPTGPQTTIDARGNISYKETPRTSARKLEHYVKHMAEGGPISEYSNRTKVQNDLKSVYKLIRKQHRLSKSSQLQFDALYKDVVHALGMNESQIIPQENGHSKKGGRSAAKRNTPTRPGKVETIPFLHLKKKTEHGWDYNKKLTGIYLNVTESAAKDGLSFQGKNVLMTGAGAGSIGAEVLQGLISGGAQVIVTTSRFSREVTEYYQAMYARYGARGSQLVVVPFNQGSKQDVEALVEYIYDTKKGLGWDLDFVVPFAAIPENGREIDSIDSKSELAHRIMLTNLLRLLGSVKTQKQAHGFETRPAQVILPLSPNHGTFGNDGLYSESKLALETLFNRWYSENWGHYLTICGAVIGWTRGTGLMSGNNMVAEGVEKLGVRTFSQQEMAFNLLGLMSPAIVNLCQLDPVFADLNGGLQFIPDLKGLMTKLRTDIMETSDVRQAVMKETAIEHNIVNGEDSGVLYKKVIAEPRANIKFEFPNLPDWEKEVKPLNENLKGMVNLDKVVVVTGFSEVGPWGNSRTRWEMESKGKFSLEGCVEMAWIMGLIKHHNGPLKGQAYSGWVDAKTGEPVDDKDVKPKYEKHILEHTGIRLIEPELFKGYDPKKKQLLQEIVIQEDLEPFEASKETAEEFKREHGDKVEIFEIPESGEYTVRLCKGATMLIPKALQFDRLVAGQVPTGWDASRYGIPDDIISQVDPVTLFVLVCTAEAMLSAGVTDPYEFYKYVHLSEVGNCIGSGIGGTHRLRGMYKDRFLDKPLQKDILQESFINTMSAWVNMLLLSSTGPIKTPVGCCATAVESVDIGYETIVEGKARVCFVGGFDDFQEEGSYEFANMKATSNAEDEFAHGRTPQEMSRPTTTTRAGFMESQGCGMQLIMTAQLALDMGVPIHGIIALTTTATDKIGRSVRSVPAPGQGVLTTARENPGKFPSPLLDIKYRRRQLDLRKKQINEWQEAELLYLQEEAEAMKAQSDETFNEAEYMQERAQHIEREAIRQEKDAQYSLGNNFWKQDSRIAPLRGAMATWGLTVDDIDVASFHGTSTVANDKNESDVICQQMKHLGRSKGNAVMGIFQKYLTGHPKGAAGAWMFNGCLQVLDSGLVPGNRNADNVDKVMEKFDYIVYPSRSIQTDGVKAFSVTSFGFGQKGAQVIGIHPKYLYATLDQAQYEAYKTKVEARQKKAYRYFHNGLINNSIFVAKSKAPYEDEQQSKVFLNPDYRVSVDKKTSELKFSTTAPEAKQSESTRQTLESLAKANATENSKIGVDVEHIDSVNIENETFVERNFTQSEQDYCRKAASPQSSFAGRWSAKEAVFKSLGVSSKGAGAALKDIEIGVDANGAPVVNLHGAAAAAAKQAGVKQVSVSISHSDSQAVAVAVSQF.

Residues 96–132 (EEEPEATEPAPSATPAAPAAAPAAGAPPPPPSAGPAA) form a disordered region. The segment covering 102–119 (TEPAPSATPAAPAAAPAA) has biased composition (low complexity). The Carrier domain maps to 139–214 (VTAVDILRTL…ASMQATFNGQ (76 aa)). Ser-174 bears the O-(pantetheine 4'-phosphoryl)serine mark. The disordered stretch occupies residues 577-604 (QIIPQENGHSKKGGRSAAKRNTPTRPGK). A beta-ketoacyl reductase region spans residues 648-845 (KNVLMTGAGA…GAVIGWTRGT (198 aa)). The Ketosynthase family 3 (KS3) domain occupies 1092-1633 (LQEIVIQEDL…QKGAQVIGIH (542 aa)). Residues Cys-1275, His-1518, and His-1559 each act as for beta-ketoacyl synthase activity in the active site. The Mg(2+) site is built by Asp-1743, Val-1744, and Glu-1745. Acetyl-CoA contacts are provided by residues 1743 to 1745 (DVE), Tyr-1769, Ser-1779, 1788 to 1798 (EAVFKSLGVSS), 1812 to 1815 (VDAN), and 1842 to 1844 (ISH). Mg(2+) is bound by residues Ser-1843 and His-1844.

This sequence belongs to the thiolase-like superfamily. Fungal fatty acid synthetase subunit alpha family. In terms of assembly, [Alpha(6)beta(6)] hexamers of two multifunctional subunits (alpha and beta).

The catalysed reaction is acetyl-CoA + n malonyl-CoA + 2n NADPH + 4n H(+) = a long-chain-acyl-CoA + n CoA + n CO2 + 2n NADP(+).. It carries out the reaction a fatty acyl-[ACP] + malonyl-[ACP] + H(+) = a 3-oxoacyl-[ACP] + holo-[ACP] + CO2. It catalyses the reaction a (3R)-hydroxyacyl-[ACP] + NADP(+) = a 3-oxoacyl-[ACP] + NADPH + H(+). Functionally, fatty acid synthetase catalyzes the formation of long-chain fatty acids from acetyl-CoA, malonyl-CoA and NADPH. The alpha subunit contains domains for: acyl carrier protein, 3-oxoacyl-[acyl-carrier-protein] reductase, and 3-oxoacyl-[acyl-carrier-protein] synthase. The chain is Fatty acid synthase subunit alpha (FAS2) from Penicillium patulum (Penicillium griseofulvum).